The sequence spans 125 residues: uncharacterized protein (125 aa).

The helical transmembrane segment at Tyr-100–Ile-120 threads the bilayer.

The protein localises to the membrane. This is an uncharacterized protein from Saccharomyces cerevisiae (strain ATCC 204508 / S288c) (Baker's yeast).